We begin with the raw amino-acid sequence, 429 residues long: Hydrogenobyrinate a,c-diamide synthase (429 aa).

The GATase cobBQ-type domain maps to 240–429 (RTAVARDVAF…SFMHLIDFSE (190 aa)). Cys323 acts as the Nucleophile in catalysis.

The protein belongs to the CobB/CbiA family. It depends on Mg(2+) as a cofactor.

The catalysed reaction is hydrogenobyrinate + 2 L-glutamine + 2 ATP + 2 H2O = hydrogenobyrinate a,c-diamide + 2 L-glutamate + 2 ADP + 2 phosphate + 2 H(+). Its pathway is cofactor biosynthesis; adenosylcobalamin biosynthesis; cob(II)yrinate a,c-diamide from precorrin-2 (aerobic route): step 9/10. Functionally, catalyzes the ATP-dependent amidation of the two carboxylate groups at positions a and c of hydrogenobyrinate, using either L-glutamine or ammonia as the nitrogen source. The protein is Hydrogenobyrinate a,c-diamide synthase of Rhizobium meliloti (strain 1021) (Ensifer meliloti).